The following is a 362-amino-acid chain: Outer membrane porin F (362 aa).

The first 22 residues, 1-22 (MMKRNILAVIVPALLVAGTANA), serve as a signal peptide directing secretion. The beta stranded transmembrane segment at 23–28 (AEIYNK) threads the bilayer. A topological domain (periplasmic) is located at residue aspartate 29. The chain crosses the membrane as a beta stranded span at residues 30-45 (GNKVDLYGKAVGLHYF). Over 46-60 (SKGNGENSYGGNGDM) the chain is Extracellular. Residues 61–73 (TYARLGFKGETQI) traverse the membrane as a beta stranded segment. Residues 74-75 (NS) lie on the Periplasmic side of the membrane. A beta stranded transmembrane segment spans residues 76-88 (DLTGYGQWEYNFQ). At 89-104 (GNNSEGADAQTGNKTR) the chain is on the extracellular side. A beta stranded membrane pass occupies residues 105-113 (LAFAGLKYA). The Periplasmic portion of the chain corresponds to 114–115 (DV). The beta stranded transmembrane segment at 116–122 (GSFDYGR) threads the bilayer. The Extracellular segment spans residues 123-156 (NYGVVYDALGYTDMLPEFGGDTAYSDDFFVGRVG). A beta stranded membrane pass occupies residues 157-163 (GVATYRN). Over 164–171 (SNFFGLVD) the chain is Periplasmic. The chain crosses the membrane as a beta stranded span at residues 172–181 (GLNFAVQYLG). The Extracellular segment spans residues 182–193 (KNERDTARRSNG). A beta stranded membrane pass occupies residues 194-204 (DGVGGSISYEY). A topological domain (periplasmic) is located at residue glutamate 205. The beta stranded transmembrane segment at 206-217 (GFGIVGAYGAAD) threads the bilayer. Topologically, residues 218–232 (RTNLQEAQPLGNGKK) are extracellular. The chain crosses the membrane as a beta stranded span at residues 233–244 (AEQWATGLKYDA). A topological domain (periplasmic) is located at residue asparagine 245. Residues 246-257 (NIYLAANYGETR) form a beta stranded membrane-spanning segment. The Extracellular segment spans residues 258–274 (NATPITNKFTNTSGFAN). Residues 275–287 (KTQDVLLVAQYQF) traverse the membrane as a beta stranded segment. The Periplasmic portion of the chain corresponds to 288–289 (DF). The beta stranded transmembrane segment at 290 to 303 (GLRPSIAYTKSKAK) threads the bilayer. At 304–313 (DVEGIGDVDL) the chain is on the extracellular side. A beta stranded membrane pass occupies residues 314–325 (VNYFEVGATYYF). Residues 326 to 327 (NK) lie on the Periplasmic side of the membrane. A beta stranded membrane pass occupies residues 328–337 (NMSTYVDYII). The Extracellular portion of the chain corresponds to 338-352 (NQIDSDNKLGVGSDD). The beta stranded transmembrane segment at 353–362 (TVAVGIVYQF) threads the bilayer.

The protein belongs to the Gram-negative porin family. As to quaternary structure, homotrimer. Forms mixed heterotrimers with OmpC and with PhoE; other mixed heterotrimers are also probable. (Microbial infection) Trimeric complexes with colicin E3, BtuB and OmpF can be cross-linked and immunoprecipitated.

The protein resides in the cell outer membrane. In terms of biological role, forms pores that allow passive diffusion of small molecules across the outer membrane. Functionally, (Microbial infection) It is also a receptor for the bacteriophage T2. Is the major receptor for colicin E5. (Microbial infection) Probably translocates colicin E3 (and other A-type colicins) across the outer membrane. Its function is as follows. (Microbial infection) A mixed OmpC-OmpF heterotrimer is the outer membrane receptor for toxin CdiA-EC536 (ECL_04451); polymorphisms in extracellular loops 4 and 5 of OmpC confer susceptibility to CdiA-EC536-mediated toxicity. In Escherichia coli (strain K12), this protein is Outer membrane porin F (ompF).